A 308-amino-acid chain; its full sequence is Phosphoribosylaminoimidazole-succinocarboxamide synthase (308 aa).

This sequence belongs to the SAICAR synthetase family.

The catalysed reaction is 5-amino-1-(5-phospho-D-ribosyl)imidazole-4-carboxylate + L-aspartate + ATP = (2S)-2-[5-amino-1-(5-phospho-beta-D-ribosyl)imidazole-4-carboxamido]succinate + ADP + phosphate + 2 H(+). It functions in the pathway purine metabolism; IMP biosynthesis via de novo pathway; 5-amino-1-(5-phospho-D-ribosyl)imidazole-4-carboxamide from 5-amino-1-(5-phospho-D-ribosyl)imidazole-4-carboxylate: step 1/2. In Xylella fastidiosa (strain 9a5c), this protein is Phosphoribosylaminoimidazole-succinocarboxamide synthase.